A 303-amino-acid polypeptide reads, in one-letter code: HTH-type transcriptional regulator LinR (303 aa).

The HTH lysR-type domain maps to 6-63 (LDFRHLVLLDALLKRHSVSAAARELDLPQPTASHGLARLRKALGDPLLVRARDGMEPT). Residues 23-42 (VSAAARELDLPQPTASHGLA) constitute a DNA-binding region (H-T-H motif).

Belongs to the LysR transcriptional regulatory family.

Positively regulates the transcription of the linD and linE genes that are involved in gamma-hexachlorocyclohexane (gamma-HCH or lindane) degradation. This degradation pathway allows S.japonicum UT26 to grow on gamma-HCH as the sole source of carbon and energy. The protein is HTH-type transcriptional regulator LinR (linR) of Sphingobium indicum (strain DSM 16413 / CCM 7287 / MTCC 6362 / UT26 / NBRC 101211 / UT26S) (Sphingobium japonicum).